The following is a 513-amino-acid chain: Putative ribose/galactose/methyl galactoside import ATP-binding protein (513 aa).

ABC transporter domains lie at 24–260 and 270–510; these read LSAE…VGRE and VPIG…VMEL. 56 to 63 contributes to the ATP binding site; sequence GENGAGKS.

Belongs to the ABC transporter superfamily. Carbohydrate importer 2 (CUT2) (TC 3.A.1.2) family.

It is found in the cell inner membrane. The catalysed reaction is D-ribose(out) + ATP + H2O = D-ribose(in) + ADP + phosphate + H(+). It catalyses the reaction D-galactose(out) + ATP + H2O = D-galactose(in) + ADP + phosphate + H(+). Part of an ABC transporter complex involved in carbohydrate import. Could be involved in ribose, galactose and/or methyl galactoside import. Responsible for energy coupling to the transport system. This Rhizobium johnstonii (strain DSM 114642 / LMG 32736 / 3841) (Rhizobium leguminosarum bv. viciae) protein is Putative ribose/galactose/methyl galactoside import ATP-binding protein.